Here is a 259-residue protein sequence, read N- to C-terminus: Oxaloacetate tautomerase FMP41, mitochondrial (259 aa).

The Mg(2+) site is built by glutamate 87, glutamate 89, and aspartate 121.

The protein belongs to the FAH family. Mg(2+) serves as cofactor. It depends on Mn(2+) as a cofactor.

The protein resides in the mitochondrion. It catalyses the reaction oxaloacetate = enol-oxaloacetate. Tautomerase that converts enol-oxaloacetate, a strong inhibitor of succinate dehydrogenase, to the physiological keto form of oxaloacetate. The protein is Oxaloacetate tautomerase FMP41, mitochondrial of Saccharomyces cerevisiae (strain ATCC 204508 / S288c) (Baker's yeast).